Consider the following 69-residue polypeptide: uncharacterized protein (69 aa).

Transmembrane regions (helical) follow at residues 7-29 (LLSGLGLFLGVLAGLAGLILGSI) and 44-66 (ALQVLNFLLLFISTIAGGFLGLL).

The protein localises to the cell membrane. This is an uncharacterized protein from Archaeoglobus fulgidus (strain ATCC 49558 / DSM 4304 / JCM 9628 / NBRC 100126 / VC-16).